The following is a 98-amino-acid chain: Cystatin-A (98 aa).

Methionine 1 carries the N-acetylmethionine modification. The short motif at 46 to 50 is the Secondary area of contact element; the sequence is QVVAG.

Belongs to the cystatin family.

It is found in the cytoplasm. Its function is as follows. This is an intracellular thiol proteinase inhibitor. This chain is Cystatin-A (CSTA), found in Bos taurus (Bovine).